The chain runs to 1048 residues: FHIP family protein GJ17503 (1048 aa).

Positions 1–15 (MSWLRTSPLRQSLTR) are enriched in polar residues. The segment at 1–32 (MSWLRTSPLRQSLTRNSGSSGSGNSSATTTLR) is disordered. Residues 16-26 (NSGSSGSGNSS) show a composition bias toward low complexity. S500 carries the phosphoserine modification. Disordered regions lie at residues 652–675 (TTTA…GRRD), 813–871 (APMH…KRRS), and 924–984 (ARGA…ESGL). Residues 816–838 (HQQHQQQQLQHTTNPTQQQQAQQ) are compositionally biased toward low complexity. Composition is skewed to polar residues over residues 839–857 (RSTY…SPTS) and 929–954 (QEQS…TAVV). Low complexity predominate over residues 955 to 978 (SSSNSSIGGSTQTLSATHSSSTLH).

The protein belongs to the FHIP family.

The protein is FHIP family protein GJ17503 of Drosophila virilis (Fruit fly).